We begin with the raw amino-acid sequence, 406 residues long: Lysine-specific demethylase 8 (406 aa).

Basic and acidic residues predominate over residues 143–152 (KAERSEEPFS). Residues 143 to 162 (KAERSEEPFSKKRKHDCKSE) form a disordered region. The region spanning 270 to 406 (DQVPELKEDI…LSFSVSFWWS (137 aa)) is the JmjC domain. Fe cation is bound by residues H311 and D313.

Requires Fe(2+) as cofactor.

Its subcellular location is the nucleus. It carries out the reaction N(6),N(6)-dimethyl-L-lysyl(36)-[histone H3] + 2 2-oxoglutarate + 2 O2 = L-lysyl(36)-[histone H3] + 2 formaldehyde + 2 succinate + 2 CO2. Its function is as follows. Histone demethylase required for G2/M phase cell cycle progression. Specifically demethylates dimethylated 'Lys-36' (H3K36me2) of histone H3, an epigenetic repressive mark, thereby acting as a transcription activator. May play a role in the regulation of the circadian clock. This Danio rerio (Zebrafish) protein is Lysine-specific demethylase 8 (kdm8).